The following is a 131-amino-acid chain: Period circadian protein (131 aa).

Residues 29–109 are disordered; it reads VTAPVELDPP…NSAGGASGGV (81 aa). Over residues 71–93 the composition is skewed to low complexity; the sequence is SGNFTTGSNVRMSSVTNTSNAGT. Residues 94–109 show a composition bias toward gly residues; sequence GTSGGGNSAGGASGGV.

As to quaternary structure, forms a heterodimer with timeless (TIM); the complex then translocates into the nucleus. In terms of processing, phosphorylated with a circadian rhythmicity, probably by the double-time protein (dbt). Phosphorylation could be implicated in the stability of per monomer and in the formation of heterodimer per-tim.

It localises to the nucleus. It is found in the cytoplasm. Its subcellular location is the perinuclear region. Its function is as follows. Essential for biological clock functions. Determines the period length of circadian and ultradian rhythms; an increase in PER dosage leads to shortened circadian rhythms and a decrease leads to lengthened circadian rhythms. Essential for the circadian rhythmicity of locomotor activity, eclosion behavior, and for the rhythmic component of the male courtship song that originates in the thoracic nervous system. The biological cycle depends on the rhythmic formation and nuclear localization of the TIM-PER complex. Light induces the degradation of TIM, which promotes elimination of PER. Nuclear activity of the heterodimer coordinatively regulates PER and TIM transcription through a negative feedback loop. Behaves as a negative element in circadian transcriptional loop. Does not appear to bind DNA, suggesting indirect transcriptional inhibition. The sequence is that of Period circadian protein (per) from Zaprionus tuberculatus (Vinegar fly).